Here is a 449-residue protein sequence, read N- to C-terminus: Tubulin alpha-B chain (449 aa).

Residues Gln-11, Glu-71, Ser-140, Gly-144, Thr-145, Thr-179, Asn-206, and Asn-228 each contribute to the GTP site. Glu-71 serves as a coordination point for Mg(2+). Glu-254 is a catalytic residue.

Belongs to the tubulin family. As to quaternary structure, dimer of alpha and beta chains. A typical microtubule is a hollow water-filled tube with an outer diameter of 25 nm and an inner diameter of 15 nM. Alpha-beta heterodimers associate head-to-tail to form protofilaments running lengthwise along the microtubule wall with the beta-tubulin subunit facing the microtubule plus end conferring a structural polarity. Microtubules usually have 13 protofilaments but different protofilament numbers can be found in some organisms and specialized cells. Mg(2+) serves as cofactor.

It is found in the cytoplasm. Its subcellular location is the cytoskeleton. It catalyses the reaction GTP + H2O = GDP + phosphate + H(+). Its function is as follows. Tubulin is the major constituent of microtubules, a cylinder consisting of laterally associated linear protofilaments composed of alpha- and beta-tubulin heterodimers. Microtubules grow by the addition of GTP-tubulin dimers to the microtubule end, where a stabilizing cap forms. Below the cap, tubulin dimers are in GDP-bound state, owing to GTPase activity of alpha-tubulin. The sequence is that of Tubulin alpha-B chain (tba-2) from Neurospora crassa (strain ATCC 24698 / 74-OR23-1A / CBS 708.71 / DSM 1257 / FGSC 987).